The following is a 623-amino-acid chain: Lethal(3)malignant brain tumor-like protein 4 (623 aa).

Positions 1 to 44 are disordered; that stretch reads MKQPNRKRKLNMDSKERLDQDGRLEQAEEEKKPKDSTTPLSHVP. Over residues 10–35 the composition is skewed to basic and acidic residues; that stretch reads LNMDSKERLDQDGRLEQAEEEKKPKD. MBT repeat units follow at residues 52-152, 160-260, and 269-364; these read WSWE…LHIP, FVWM…LIAP, and FSWT…LEVP. Residues 370 to 414 form a CCHHC-type zinc finger; it reads LKILPGQAVCPTPGCRGIGHIRGPRYSGHHSAFGCPYSDMNLKKE. Positions 379, 384, 398, and 404 each coordinate Zn(2+). In terms of domain architecture, SAM spans 543–607; it reads WTVDEVAEFV…YNSILMFRHS (65 aa).

The protein resides in the nucleus. Functionally, putative Polycomb group (PcG) protein. PcG proteins maintain the transcriptionally repressive state of genes, probably via a modification of chromatin, rendering it heritably changed in its expressibility. The polypeptide is Lethal(3)malignant brain tumor-like protein 4 (L3MBTL4) (Homo sapiens (Human)).